We begin with the raw amino-acid sequence, 384 residues long: Deoxyguanosinetriphosphate triphosphohydrolase-like protein (384 aa).

Residues 12 to 39 (ELASYASDPSKTRGRRHSEPPPENRTEF) are disordered. Positions 28–39 (HSEPPPENRTEF) are enriched in basic and acidic residues. The HD domain occupies 73-208 (RLTHSLEVAQ…ANLADEVAYN (136 aa)).

The protein belongs to the dGTPase family. Type 2 subfamily.

The chain is Deoxyguanosinetriphosphate triphosphohydrolase-like protein from Bordetella parapertussis (strain 12822 / ATCC BAA-587 / NCTC 13253).